The chain runs to 665 residues: tRNA 5-methylaminomethyl-2-thiouridine biosynthesis bifunctional protein MnmC (665 aa).

Residues M1–I235 form a tRNA (mnm(5)s(2)U34)-methyltransferase region. The tract at residues I266–H665 is FAD-dependent cmnm(5)s(2)U34 oxidoreductase.

This sequence in the N-terminal section; belongs to the methyltransferase superfamily. tRNA (mnm(5)s(2)U34)-methyltransferase family. In the C-terminal section; belongs to the DAO family. It depends on FAD as a cofactor.

Its subcellular location is the cytoplasm. The enzyme catalyses 5-aminomethyl-2-thiouridine(34) in tRNA + S-adenosyl-L-methionine = 5-methylaminomethyl-2-thiouridine(34) in tRNA + S-adenosyl-L-homocysteine + H(+). Its function is as follows. Catalyzes the last two steps in the biosynthesis of 5-methylaminomethyl-2-thiouridine (mnm(5)s(2)U) at the wobble position (U34) in tRNA. Catalyzes the FAD-dependent demodification of cmnm(5)s(2)U34 to nm(5)s(2)U34, followed by the transfer of a methyl group from S-adenosyl-L-methionine to nm(5)s(2)U34, to form mnm(5)s(2)U34. This chain is tRNA 5-methylaminomethyl-2-thiouridine biosynthesis bifunctional protein MnmC, found in Pseudomonas syringae pv. syringae (strain B728a).